The sequence spans 467 residues: ATP-dependent protease ATPase subunit HslU (467 aa).

Residues Val22 and 64–69 (GVGKTE) contribute to the ATP site. The tract at residues 149 to 192 (QTNNPLESLFGGAIPNFGQNNEDEEEPPTEEIKTKRSEIKRQLE) is disordered. Residues 178 to 192 (EEIKTKRSEIKRQLE) show a composition bias toward basic and acidic residues. Asp280, Glu345, and Arg417 together coordinate ATP.

This sequence belongs to the ClpX chaperone family. HslU subfamily. As to quaternary structure, a double ring-shaped homohexamer of HslV is capped on each side by a ring-shaped HslU homohexamer. The assembly of the HslU/HslV complex is dependent on binding of ATP.

The protein resides in the cytoplasm. ATPase subunit of a proteasome-like degradation complex; this subunit has chaperone activity. The binding of ATP and its subsequent hydrolysis by HslU are essential for unfolding of protein substrates subsequently hydrolyzed by HslV. HslU recognizes the N-terminal part of its protein substrates and unfolds these before they are guided to HslV for hydrolysis. In Staphylococcus aureus (strain Mu3 / ATCC 700698), this protein is ATP-dependent protease ATPase subunit HslU.